The primary structure comprises 469 residues: Putative pyridoxal-dependent decarboxylase domain-containing protein 2 (469 aa).

Residues 12–40 (TLAEMGKNLKEAVKMLEDSQRRTEEENGK) are a coiled coil. Positions 28–44 (EDSQRRTEEENGKKLIS) are enriched in basic and acidic residues. Residues 28 to 47 (EDSQRRTEEENGKKLISRDI) form a disordered region.

This sequence belongs to the group II decarboxylase family. Pyridoxal 5'-phosphate serves as cofactor.

This is Putative pyridoxal-dependent decarboxylase domain-containing protein 2 (PDXDC2P) from Homo sapiens (Human).